We begin with the raw amino-acid sequence, 252 residues long: uncharacterized protein (252 aa).

This is an uncharacterized protein from Rickettsia prowazekii (strain Madrid E).